The sequence spans 439 residues: 23S rRNA (uracil(1939)-C(5))-methyltransferase RlmD (439 aa).

Positions 10–68 (KSTQPQRIEFTVDSLDHHCVGIGRHQGKAIFIEGALPGEQVKARILDDKKQYAHAALQQ) constitute a TRAM domain. Residues cysteine 81, cysteine 87, cysteine 90, and cysteine 169 each contribute to the [4Fe-4S] cluster site. Residues glutamine 273, phenylalanine 302, asparagine 307, glutamate 323, aspartate 350, and aspartate 371 each coordinate S-adenosyl-L-methionine. Cysteine 397 (nucleophile) is an active-site residue.

This sequence belongs to the class I-like SAM-binding methyltransferase superfamily. RNA M5U methyltransferase family. RlmD subfamily.

It carries out the reaction uridine(1939) in 23S rRNA + S-adenosyl-L-methionine = 5-methyluridine(1939) in 23S rRNA + S-adenosyl-L-homocysteine + H(+). Functionally, catalyzes the formation of 5-methyl-uridine at position 1939 (m5U1939) in 23S rRNA. This chain is 23S rRNA (uracil(1939)-C(5))-methyltransferase RlmD, found in Aeromonas salmonicida (strain A449).